A 905-amino-acid polypeptide reads, in one-letter code: Tight junction protein ZO-3 (905 aa).

Residues T11–R93 enclose the PDZ 1 domain. Residues P92 to D167 form a disordered region. Phosphoserine occurs at positions 111 and 128. The span at G124–S133 shows a compositional bias: low complexity. The segment covering R139–R155 has biased composition (basic residues). Residues S156, S157, S161, S195, and S311 each carry the phosphoserine modification. One can recognise a PDZ 2 domain in the interval S187–S264. A disordered region spans residues L289–P367. A Phosphothreonine modification is found at T317. S319, S343, and S359 each carry phosphoserine. The PDZ 3 domain occupies D368–L434. Positions G464–A541 constitute an SH3 domain. The 182-residue stretch at R573–Q754 folds into the Guanylate kinase-like domain. A Phosphoserine modification is found at S584. 2 disordered regions span residues E773–V818 and T850–L905. The segment covering D851–E877 has biased composition (basic and acidic residues). Phosphoserine occurs at positions 891 and 892.

The protein belongs to the MAGUK family. Interacts with occludin OCLN, claudins and TPJ1. Interacts with PATJ. Interacts with UBN1. Interacts with FASLG. Interacts with CCND1. In terms of processing, phosphorylated. As to expression, is concentrated in various types of epithelium, in tissues such as the lung, liver and kidney, but not in endothelium or at cadherin-based cell-cell adhesion sites.

It is found in the cell membrane. It localises to the cell junction. The protein localises to the tight junction. The protein resides in the nucleus. In terms of biological role, tjp1, Tjp2, and Tjp3 are closely related scaffolding proteins that link tight junction (TJ) transmembrane proteins such as claudins, junctional adhesion molecules, and occludin to the actin cytoskeleton. The tight junction acts to limit movement of substances through the paracellular space and as a boundary between the compositionally distinct apical and basolateral plasma membrane domains of epithelial and endothelial cells. Binds and recruits PatJ to tight junctions where it connects and stabilizes apical and lateral components of tight junctions. Promotes cell-cycle progression through the sequestration of cyclin D1 (Ccnd1) at tight junctions during mitosis which prevents Ccnd1 degradation during M-phase and enables S-phase transition. With Tjp1 and Tjp2, participates in the junctional retention and stability of the transcription factor DbpA, but is not involved in its shuttling to the nucleus. Contrary to Tjp2, Tjp3 is dispensable for individual viability, embryonic development, epithelial differentiation, and the establishment of TJs, at least in the laboratory environment. This Mus musculus (Mouse) protein is Tight junction protein ZO-3 (Tjp3).